The following is a 224-amino-acid chain: Pre-hexon-linking protein VIII (224 aa).

A Phosphothreonine; by host modification is found at Thr-64. Residues 112–154 constitute a propeptide that is removed on maturation; sequence RQLCPSQIGIKSPVLAGTGIQLSEDIPSASWIRPDGIFQLGGG.

Belongs to the adenoviridae hexon-linking protein family. As to quaternary structure, interacts with the peripentonal hexons as well as the hexons in the facets. Part of a complex composed of the core-capsid bridging protein, the endosome lysis protein VI and the hexon-linking protein VIII; these interactions bridge the virus core to the capsid. In terms of processing, cleaved by the viral protease during virion maturation. May cause the middle segment to be shed from the capsid.

It localises to the virion. Its subcellular location is the host nucleus. Structural component of the virion that acts as a cement protein on the capsid interior and which glue the peripentonal hexons and group-of-nine hexons together. In Canis lupus familiaris (Dog), this protein is Pre-hexon-linking protein VIII.